A 507-amino-acid polypeptide reads, in one-letter code: Maturase K (507 aa).

This sequence belongs to the intron maturase 2 family. MatK subfamily.

It localises to the plastid. The protein localises to the chloroplast. In terms of biological role, usually encoded in the trnK tRNA gene intron. Probably assists in splicing its own and other chloroplast group II introns. In Liriodendron tulipifera (Tuliptree), this protein is Maturase K.